A 246-amino-acid polypeptide reads, in one-letter code: Pyridoxine 5'-phosphate synthase (246 aa).

Residue N7 coordinates 3-amino-2-oxopropyl phosphate. 9–10 (DH) contributes to the 1-deoxy-D-xylulose 5-phosphate binding site. R18 is a binding site for 3-amino-2-oxopropyl phosphate. The active-site Proton acceptor is H43. Residues R45 and H50 each coordinate 1-deoxy-D-xylulose 5-phosphate. Catalysis depends on E70, which acts as the Proton acceptor. T100 is a 1-deoxy-D-xylulose 5-phosphate binding site. Residue H190 is the Proton donor of the active site. 3-amino-2-oxopropyl phosphate-binding positions include G191 and 212 to 213 (GH).

The protein belongs to the PNP synthase family. As to quaternary structure, homooctamer; tetramer of dimers.

It localises to the cytoplasm. The enzyme catalyses 3-amino-2-oxopropyl phosphate + 1-deoxy-D-xylulose 5-phosphate = pyridoxine 5'-phosphate + phosphate + 2 H2O + H(+). The protein operates within cofactor biosynthesis; pyridoxine 5'-phosphate biosynthesis; pyridoxine 5'-phosphate from D-erythrose 4-phosphate: step 5/5. Its function is as follows. Catalyzes the complicated ring closure reaction between the two acyclic compounds 1-deoxy-D-xylulose-5-phosphate (DXP) and 3-amino-2-oxopropyl phosphate (1-amino-acetone-3-phosphate or AAP) to form pyridoxine 5'-phosphate (PNP) and inorganic phosphate. In Bordetella petrii (strain ATCC BAA-461 / DSM 12804 / CCUG 43448), this protein is Pyridoxine 5'-phosphate synthase.